Reading from the N-terminus, the 116-residue chain is MVGGEAAAAVEELVSGVRQAADFAEQFRSYSESEKQWKARMEFILRHLPDYRDPPDGSGRLDQLLSLSMVWANHLFLGCSYNKDLLDKVMEMADGIEVEDLPQFTTRSELMKKHQS.

Residue Met1 is modified to N-acetylmethionine. The XRN2-binding (XTBD) domain occupies 24 to 116 (AEQFRSYSES…RSELMKKHQS (93 aa)).

This sequence belongs to the CARF family. In terms of assembly, interacts with XRN2; the interaction is direct.

The chain is CDKN2AIP N-terminal-like protein (CDKN2AIPNL) from Homo sapiens (Human).